Here is a 394-residue protein sequence, read N- to C-terminus: Myb-like protein R (394 aa).

A run of 2 helical transmembrane segments spans residues 11 to 31 (IGAQ…EFII) and 99 to 119 (FFIG…LIIF). Residues 325–377 (GNWSLDEQKALMVEVSTLGNKSEINWFFISKQLFLKGISRNARECQRKHESIQ) enclose the Myb-like domain.

Its subcellular location is the membrane. The sequence is that of Myb-like protein R (mybR) from Dictyostelium discoideum (Social amoeba).